Here is a 322-residue protein sequence, read N- to C-terminus: 4-hydroxy-3-methylbut-2-enyl diphosphate reductase (322 aa).

Residue C12 participates in [4Fe-4S] cluster binding. The (2E)-4-hydroxy-3-methylbut-2-enyl diphosphate site is built by H43 and H81. Dimethylallyl diphosphate is bound by residues H43 and H81. H43 and H81 together coordinate isopentenyl diphosphate. C103 is a binding site for [4Fe-4S] cluster. A (2E)-4-hydroxy-3-methylbut-2-enyl diphosphate-binding site is contributed by H131. H131 contributes to the dimethylallyl diphosphate binding site. Isopentenyl diphosphate is bound at residue H131. E133 serves as the catalytic Proton donor. T172 serves as a coordination point for (2E)-4-hydroxy-3-methylbut-2-enyl diphosphate. A [4Fe-4S] cluster-binding site is contributed by C200. S228, N230, and S273 together coordinate (2E)-4-hydroxy-3-methylbut-2-enyl diphosphate. S228, N230, and S273 together coordinate dimethylallyl diphosphate. The isopentenyl diphosphate site is built by S228, N230, and S273.

This sequence belongs to the IspH family. Requires [4Fe-4S] cluster as cofactor.

It catalyses the reaction isopentenyl diphosphate + 2 oxidized [2Fe-2S]-[ferredoxin] + H2O = (2E)-4-hydroxy-3-methylbut-2-enyl diphosphate + 2 reduced [2Fe-2S]-[ferredoxin] + 2 H(+). It carries out the reaction dimethylallyl diphosphate + 2 oxidized [2Fe-2S]-[ferredoxin] + H2O = (2E)-4-hydroxy-3-methylbut-2-enyl diphosphate + 2 reduced [2Fe-2S]-[ferredoxin] + 2 H(+). Its pathway is isoprenoid biosynthesis; dimethylallyl diphosphate biosynthesis; dimethylallyl diphosphate from (2E)-4-hydroxy-3-methylbutenyl diphosphate: step 1/1. The protein operates within isoprenoid biosynthesis; isopentenyl diphosphate biosynthesis via DXP pathway; isopentenyl diphosphate from 1-deoxy-D-xylulose 5-phosphate: step 6/6. In terms of biological role, catalyzes the conversion of 1-hydroxy-2-methyl-2-(E)-butenyl 4-diphosphate (HMBPP) into a mixture of isopentenyl diphosphate (IPP) and dimethylallyl diphosphate (DMAPP). Acts in the terminal step of the DOXP/MEP pathway for isoprenoid precursor biosynthesis. This Macrococcus caseolyticus (strain JCSC5402) (Macrococcoides caseolyticum) protein is 4-hydroxy-3-methylbut-2-enyl diphosphate reductase.